Here is a 193-residue protein sequence, read N- to C-terminus: AP-3 complex subunit sigma-2 (193 aa).

This sequence belongs to the adaptor complexes small subunit family. As to quaternary structure, adaptor protein complex 3 (AP-3) is a heterotetramer composed of two large adaptins (delta-type subunit AP3D1 and beta-type subunit AP3B1 or AP3B2), a medium adaptin (mu-type subunit AP3M1 or AP3M2) and a small adaptin (sigma-type subunit APS1 or AP3S2). Interacts with AGAP1. AP-3 associates with the BLOC-1 complex.

It is found in the golgi apparatus. The protein localises to the cytoplasmic vesicle membrane. Functionally, part of the AP-3 complex, an adaptor-related complex which is not clathrin-associated. The complex is associated with the Golgi region as well as more peripheral structures. It facilitates the budding of vesicles from the Golgi membrane and may be directly involved in trafficking to lysosomes. In concert with the BLOC-1 complex, AP-3 is required to target cargos into vesicles assembled at cell bodies for delivery into neurites and nerve terminals. The chain is AP-3 complex subunit sigma-2 (AP3S2) from Bos taurus (Bovine).